Reading from the N-terminus, the 346-residue chain is Golgi-associated RAB2 interactor protein 2 (346 aa).

A disordered region spans residues 275–346 (TPVESEANTS…EKHVRQPKDF (72 aa)). Basic and acidic residues-rich tracts occupy residues 283-297 (TSKEMENKTSEEKTP) and 334-346 (KLVEKHVRQPKDF).

This sequence belongs to the GARIN family. Interacts with CALM1.

The protein resides in the cell projection. Its subcellular location is the cilium. It localises to the flagellum. In terms of biological role, seems to play a role in sperm motility. This is Golgi-associated RAB2 interactor protein 2 (GARIN2) from Macaca fascicularis (Crab-eating macaque).